The sequence spans 298 residues: Glutamyl-Q tRNA(Asp) synthetase (298 aa).

L-glutamate is bound by residues 9–13 (RFAPS) and E45. The 'HIGH' region signature appears at 12–22 (PSPSGELHFGS). The Zn(2+) site is built by C101, C103, Y115, and C119. Y172 and R190 together coordinate L-glutamate. A 'KMSKS' region motif is present at residues 228–232 (KLSKQ). Residue K231 coordinates ATP.

The protein belongs to the class-I aminoacyl-tRNA synthetase family. GluQ subfamily. Zn(2+) is required as a cofactor.

In terms of biological role, catalyzes the tRNA-independent activation of glutamate in presence of ATP and the subsequent transfer of glutamate onto a tRNA(Asp). Glutamate is transferred on the 2-amino-5-(4,5-dihydroxy-2-cyclopenten-1-yl) moiety of the queuosine in the wobble position of the QUC anticodon. This is Glutamyl-Q tRNA(Asp) synthetase from Cronobacter sakazakii (strain ATCC BAA-894) (Enterobacter sakazakii).